Here is a 258-residue protein sequence, read N- to C-terminus: Cobalt-precorrin-4 C(11)-methyltransferase (258 aa).

The protein belongs to the precorrin methyltransferase family. As to quaternary structure, homodimer.

It carries out the reaction Co-precorrin-4 + S-adenosyl-L-methionine = Co-precorrin-5A + S-adenosyl-L-homocysteine + H(+). The protein operates within cofactor biosynthesis; adenosylcobalamin biosynthesis; cob(II)yrinate a,c-diamide from sirohydrochlorin (anaerobic route): step 4/10. Functionally, catalyzes the methylation of C-11 in cobalt-precorrin-4 to form cobalt-precorrin-5A. The sequence is that of Cobalt-precorrin-4 C(11)-methyltransferase (cbiF) from Priestia megaterium (Bacillus megaterium).